Consider the following 418-residue polypeptide: Tektin-1 (418 aa).

Coiled-coil stretches lie at residues 21-84 (KNQY…LEQL), 268-308 (LKET…DQEG), and 336-383 (RLIK…ENTI). Positions 399–418 (PRDGDDHGEWAGGSHPEAVC) are disordered.

Belongs to the tektin family. As to quaternary structure, microtubule inner protein component of sperm flagellar doublet microtubules. In terms of processing, ubiquitinated, leading to its degradation. Deubiquitinated by USP16, promoting its stability. In terms of tissue distribution, expressed in trachea multiciliated cells.

It localises to the cytoplasm. It is found in the cytoskeleton. Its subcellular location is the cilium axoneme. The protein localises to the flagellum axoneme. Functionally, microtubule inner protein (MIP) part of the dynein-decorated doublet microtubules (DMTs) in cilia and flagellar axoneme. Forms filamentous polymers in the walls of ciliary and flagellar microtubules. The protein is Tektin-1 (TEKT1) of Bos taurus (Bovine).